The primary structure comprises 34 residues: Conotoxin Cl6d (34 aa).

3 cysteine pairs are disulfide-bonded: cysteine 4–cysteine 19, cysteine 12–cysteine 29, and cysteine 18–cysteine 33. A 4-hydroxyproline mark is found at proline 14 and proline 21.

Expressed by the venom duct.

The protein resides in the secreted. This Californiconus californicus (California cone) protein is Conotoxin Cl6d.